The sequence spans 357 residues: Type II methyltransferase M1.HgaI (357 aa).

One can recognise an SAM-dependent MTase C5-type domain in the interval 5 to 357 (IMGLSLFSSA…NITREIFNEN (353 aa)). Residue Cys83 is part of the active site.

The protein belongs to the class I-like SAM-binding methyltransferase superfamily. C5-methyltransferase family.

The catalysed reaction is a 2'-deoxycytidine in DNA + S-adenosyl-L-methionine = a 5-methyl-2'-deoxycytidine in DNA + S-adenosyl-L-homocysteine + H(+). Functionally, a methylase that recognizes DNA with the sequence 5'-GCGTC-3', methylates C-2, and protects the DNA from cleavage by the HgaI endonuclease. This is Type II methyltransferase M1.HgaI (hgaIAM) from Avibacterium volantium (Pasteurella volantium).